A 250-amino-acid polypeptide reads, in one-letter code: Agamous-like MADS-box protein AGL8 homolog (250 aa).

In terms of domain architecture, MADS-box spans Arg3–Tyr57. Residues Pro88–Glu178 form the K-box domain.

Abundant in vegetative organs.

The protein localises to the nucleus. In terms of biological role, probable transcription factor. The protein is Agamous-like MADS-box protein AGL8 homolog of Solanum tuberosum (Potato).